Consider the following 132-residue polypeptide: Small ribosomal subunit protein uS8c (132 aa).

It belongs to the universal ribosomal protein uS8 family. As to quaternary structure, part of the 30S ribosomal subunit.

The protein resides in the plastid. Its subcellular location is the chloroplast. In terms of biological role, one of the primary rRNA binding proteins, it binds directly to 16S rRNA central domain where it helps coordinate assembly of the platform of the 30S subunit. This is Small ribosomal subunit protein uS8c (rps8) from Rhodomonas salina (Cryptomonas salina).